The chain runs to 272 residues: Polar tube protein 2 (272 aa).

A signal peptide spans 1-21; it reads MLLLFTVVTLVSAAQVAPVTP. N-linked (GlcNAc...) asparagine glycosylation occurs at asparagine 134. The disordered stretch occupies residues 231-272; the sequence is RAIQKKEVKESSKDGEKSSTQNGEGTTDDEDGQQSPDGNGPE. The span at 234-247 shows a compositional bias: basic and acidic residues; the sequence is QKKEVKESSKDGEK. The span at 263 to 272 shows a compositional bias: polar residues; it reads QQSPDGNGPE.

It is found in the spore polar tube. Functionally, involved in formation of a polar tube through which the infectious agent is passed on to the host cell. The chain is Polar tube protein 2 (PTP2) from Encephalitozoon hellem (Microsporidian parasite).